A 325-amino-acid chain; its full sequence is Formimidoylglutamase (325 aa).

Mn(2+)-binding residues include H130, D156, H158, D160, C244, and D246.

This sequence belongs to the arginase family. Requires Mn(2+) as cofactor.

The catalysed reaction is N-formimidoyl-L-glutamate + H2O = formamide + L-glutamate. It functions in the pathway amino-acid degradation; L-histidine degradation into L-glutamate; L-glutamate from N-formimidoyl-L-glutamate (hydrolase route): step 1/1. Its function is as follows. Catalyzes the conversion of N-formimidoyl-L-glutamate to L-glutamate and formamide. The protein is Formimidoylglutamase of Geobacillus sp. (strain WCH70).